Here is a 292-residue protein sequence, read N- to C-terminus: uncharacterized protein (292 aa).

Active-site charge relay system residues include Ser44 and Tyr106. Residue Tyr132 is the Proton donor of the active site. Lys161 serves as the catalytic Schiff-base intermediate with substrate.

Belongs to the DapA family. In terms of assembly, homotetramer.

Its subcellular location is the cytoplasm. This is an uncharacterized protein from Thermoplasma acidophilum (strain ATCC 25905 / DSM 1728 / JCM 9062 / NBRC 15155 / AMRC-C165).